The following is a 298-amino-acid chain: Probable endonuclease 4 (298 aa).

Residues His-69, His-111, Glu-146, Asp-180, His-183, His-215, Asp-228, His-230, and Glu-260 each coordinate Zn(2+).

This sequence belongs to the AP endonuclease 2 family. Zn(2+) is required as a cofactor.

The catalysed reaction is Endonucleolytic cleavage to 5'-phosphooligonucleotide end-products.. Functionally, endonuclease IV plays a role in DNA repair. It cleaves phosphodiester bonds at apurinic or apyrimidinic (AP) sites, generating a 3'-hydroxyl group and a 5'-terminal sugar phosphate. This is Probable endonuclease 4 from Bacillus cereus (strain G9842).